A 360-amino-acid chain; its full sequence is F-box protein SKP2A (360 aa).

Residues 25 to 71 (IKEWKDIPVELLMRILSLVDDRNVIVASGVCTGWRDAISFGLTRLRL) enclose the F-box domain. (indol-3-yl)acetate-binding positions include 127–128 (SL), 149–152 (NLSG), 175–178 (NLCG), and asparagine 202.

As to quaternary structure, part of a SCF (ASK-cullin-F-box) protein ligase complex. Interacts with CUL1 (RUB1-modified and non-modified isoforms), SKP1A, SKP1B and ASK18. Recruit DPB and phosphorylated E2FC. Interacts with auxin. Auxin controls the interaction with DPB. In terms of processing, polyubiquitinated and subsequently targeted to proteasome. Auxin promotes this ubiquitination-mediated degradation. In terms of tissue distribution, expressed in embryo, seedlings, hypocotyl, roots, leaves and flowers.

The protein resides in the nucleus. It functions in the pathway protein modification; protein ubiquitination. Its function is as follows. Component of SCF(SKP2A) E3 ubiquitin ligase complexes, which mediate the ubiquitination and subsequent proteasomal degradation of target proteins (including cell cycle repressors). Acts as an auxin receptor; one active auxin is indole-3-acetate. Regulates the stability of the transcription factors E2FC and DPB, repressors of cell proliferation. Confers increase tolerance to osmotic stress by promoting cell division, especially in meristems. Promotes the formation of lateral root primordia. This is F-box protein SKP2A (SKP2A) from Arabidopsis thaliana (Mouse-ear cress).